Reading from the N-terminus, the 243-residue chain is MKYMENNNTSHSKHPFIIGVTGGTASGKTTVCDEIMKRLENKRIAIICLDSFYRPLSKEDRETVASYNFDHPDAFDWSLVENALRDLKDGKDIEIPTYCFKSHSRLEETVGLGDVDVILFEGILSFYTQSLREQMDIKIFVDTDSDTRLSRRVMRDIAERGRSLEGVLYQYEKFVKPAFDDYILPTKKHADVIIPRGADNVVAIDLIVQHISSKLSEKESFRKSQGQLNVNGGSNTASSVNHA.

22-29 (GGTASGKT) contacts ATP.

The protein belongs to the uridine kinase family.

The enzyme catalyses uridine + ATP = UMP + ADP + H(+). It catalyses the reaction cytidine + ATP = CMP + ADP + H(+). It functions in the pathway pyrimidine metabolism; CTP biosynthesis via salvage pathway; CTP from cytidine: step 1/3. The protein operates within pyrimidine metabolism; UMP biosynthesis via salvage pathway; UMP from uridine: step 1/1. In terms of biological role, catalyzes the conversion of uridine into uridine monophosphate and cytidine into cytidine monophosphate in the pyrimidine salvage pathway. The sequence is that of Uridine-cytidine kinase B (udkB) from Dictyostelium discoideum (Social amoeba).